We begin with the raw amino-acid sequence, 253 residues long: Imidazole glycerol phosphate synthase subunit HisF (253 aa).

Active-site residues include Asp11 and Asp130.

The protein belongs to the HisA/HisF family. In terms of assembly, heterodimer of HisH and HisF.

It localises to the cytoplasm. It carries out the reaction 5-[(5-phospho-1-deoxy-D-ribulos-1-ylimino)methylamino]-1-(5-phospho-beta-D-ribosyl)imidazole-4-carboxamide + L-glutamine = D-erythro-1-(imidazol-4-yl)glycerol 3-phosphate + 5-amino-1-(5-phospho-beta-D-ribosyl)imidazole-4-carboxamide + L-glutamate + H(+). The protein operates within amino-acid biosynthesis; L-histidine biosynthesis; L-histidine from 5-phospho-alpha-D-ribose 1-diphosphate: step 5/9. In terms of biological role, IGPS catalyzes the conversion of PRFAR and glutamine to IGP, AICAR and glutamate. The HisF subunit catalyzes the cyclization activity that produces IGP and AICAR from PRFAR using the ammonia provided by the HisH subunit. The protein is Imidazole glycerol phosphate synthase subunit HisF of Geobacter metallireducens (strain ATCC 53774 / DSM 7210 / GS-15).